We begin with the raw amino-acid sequence, 106 residues long: Malonate decarboxylase acyl carrier protein (106 aa).

Ser28 is modified (O-(phosphoribosyl dephospho-coenzyme A)serine).

This sequence belongs to the MdcC family. Post-translationally, covalently binds the prosthetic group of malonate decarboxylase.

It localises to the cytoplasm. Its function is as follows. Subunit of malonate decarboxylase, it is an acyl carrier protein to which acetyl and malonyl thioester residues are bound via a 2'-(5''-phosphoribosyl)-3'-dephospho-CoA prosthetic group and turn over during the catalytic mechanism. The sequence is that of Malonate decarboxylase acyl carrier protein from Stenotrophomonas maltophilia (strain K279a).